The primary structure comprises 432 residues: Adenylosuccinate synthetase (432 aa).

Residues 13-19 (GDEGKGK) and 41-43 (GHT) contribute to the GTP site. Catalysis depends on Asp14, which acts as the Proton acceptor. Mg(2+) is bound by residues Asp14 and Gly41. IMP is bound by residues 14-17 (DEGK), 39-42 (NAGH), Thr130, Arg144, Gln225, Thr240, and Arg304. The active-site Proton donor is the His42. 300–306 (AVTGRPR) provides a ligand contact to substrate. Residues Arg306, 332 to 334 (KLD), and 415 to 417 (STG) each bind GTP.

This sequence belongs to the adenylosuccinate synthetase family. Homodimer. Requires Mg(2+) as cofactor.

The protein resides in the cytoplasm. The catalysed reaction is IMP + L-aspartate + GTP = N(6)-(1,2-dicarboxyethyl)-AMP + GDP + phosphate + 2 H(+). The protein operates within purine metabolism; AMP biosynthesis via de novo pathway; AMP from IMP: step 1/2. Functionally, plays an important role in the de novo pathway of purine nucleotide biosynthesis. Catalyzes the first committed step in the biosynthesis of AMP from IMP. The chain is Adenylosuccinate synthetase from Haemophilus influenzae (strain PittGG).